A 251-amino-acid polypeptide reads, in one-letter code: Triosephosphate isomerase (251 aa).

9–11 is a binding site for substrate; that stretch reads NWK. Histidine 95 functions as the Electrophile in the catalytic mechanism. Glutamate 167 functions as the Proton acceptor in the catalytic mechanism. Residues glycine 173, serine 212, and 233 to 234 contribute to the substrate site; that span reads GG.

Belongs to the triosephosphate isomerase family. In terms of assembly, homodimer.

The protein localises to the cytoplasm. It catalyses the reaction D-glyceraldehyde 3-phosphate = dihydroxyacetone phosphate. It functions in the pathway carbohydrate biosynthesis; gluconeogenesis. It participates in carbohydrate degradation; glycolysis; D-glyceraldehyde 3-phosphate from glycerone phosphate: step 1/1. Its function is as follows. Involved in the gluconeogenesis. Catalyzes stereospecifically the conversion of dihydroxyacetone phosphate (DHAP) to D-glyceraldehyde-3-phosphate (G3P). The protein is Triosephosphate isomerase of Pseudomonas putida (strain GB-1).